A 413-amino-acid polypeptide reads, in one-letter code: Phosphopentomutase (413 aa).

Mn(2+)-binding residues include Asp11, Asp306, His311, Asp347, His348, and His359.

The protein belongs to the phosphopentomutase family. The cofactor is Mn(2+).

It localises to the cytoplasm. The catalysed reaction is 2-deoxy-alpha-D-ribose 1-phosphate = 2-deoxy-D-ribose 5-phosphate. It carries out the reaction alpha-D-ribose 1-phosphate = D-ribose 5-phosphate. It participates in carbohydrate degradation; 2-deoxy-D-ribose 1-phosphate degradation; D-glyceraldehyde 3-phosphate and acetaldehyde from 2-deoxy-alpha-D-ribose 1-phosphate: step 1/2. Isomerase that catalyzes the conversion of deoxy-ribose 1-phosphate (dRib-1-P) and ribose 1-phosphate (Rib-1-P) to deoxy-ribose 5-phosphate (dRib-5-P) and ribose 5-phosphate (Rib-5-P), respectively. In Helicobacter pylori (strain Shi470), this protein is Phosphopentomutase.